Here is a 70-residue protein sequence, read N- to C-terminus: Conotoxin TxMMSK-02 (70 aa).

An N-terminal signal peptide occupies residues 1 to 20 (MMSKLGALLTICLLLFSLTA). The propeptide occupies 21 to 53 (VPLDGDQHADQPAQRLQDRIPTEDHPLFDPNKR). 3 cysteine pairs are disulfide-bonded: C54–C68, C55–C64, and C60–C67. The residue at position 66 (P66) is a 4-hydroxyproline. Tyrosine amide is present on Y69.

The protein belongs to the conotoxin M superfamily. As to expression, expressed by the venom duct.

It is found in the secreted. The protein is Conotoxin TxMMSK-02 of Conus textile (Cloth-of-gold cone).